A 1256-amino-acid chain; its full sequence is Nephrin (1256 aa).

The signal sequence occupies residues 1-35 (MGAKEATVRGPGASPVHRTCHLIPLLLAGMLTTGL). Residues 36 to 1078 (AQSPVPTSAP…PGPPRLPLLP (1043 aa)) are Extracellular-facing. 6 Ig-like C2-type domains span residues 39-144 (PVPT…VILS), 149-247 (PKVL…ASFT), 256-347 (PPVI…RSIT), 354-448 (PSAV…KSLT), 454-554 (PAQK…TQLV), and 558-649 (PPTN…ETVS). Residue N54 is glycosylated (N-linked (GlcNAc...) asparagine). Disulfide bonds link C67/C125, C174/C231, and C279/C331. N370 and N415 each carry an N-linked (GlcNAc...) asparagine glycan. A disulfide bond links C375 and C431. Position 446 is a phosphoserine (S446). C479 and C542 form a disulfide bridge. The segment at 491–516 (TWLKDSRPVNDPRQSQEPRRVQLGSV) is disordered. Residues 494–510 (KDSRPVNDPRQSQEPRR) show a composition bias toward basic and acidic residues. 4 N-linked (GlcNAc...) asparagine glycosylation sites follow: N561, N578, N591, and N722. C581 and C637 form a disulfide bridge. 2 consecutive Ig-like C2-type domains span residues 754–846 (PTIR…LVRL) and 852–953 (PQVD…VSIS). Disulfide bonds link C775–C830 and C877–C934. In terms of domain architecture, Fibronectin type-III spans 957 to 1051 (PPLGLKVVSV…GIQVSITTPG (95 aa)). Residues 1048–1071 (TTPGLDQAPEDTDQPLPTEQPPGP) form a disordered region. The helical transmembrane segment at 1079–1099 (VLFAVGGLLLLSNASCVGGLL) threads the bilayer. Topologically, residues 1100–1256 (WRRRLRRLAE…LPFELRGHLV (157 aa)) are cytoplasmic. S1112 carries the phosphoserine modification. Residues 1112–1128 (SEKTEAGSEEDRIRNEY) are compositionally biased toward basic and acidic residues. The segment at 1112 to 1143 (SEKTEAGSEEDRIRNEYEESQWTGDRDTRSST) is disordered. Residue T1115 is modified to Phosphothreonine. S1119 bears the Phosphoserine mark. Y1208 bears the Phosphotyrosine; by FYN mark.

Belongs to the immunoglobulin superfamily. As to quaternary structure, interacts with NPHS2 and with CD2AP (via C-terminal domain). Interacts with MAGI1 (via PDZ 2 and 3 domains) forming a tripartite complex with IGSF5/JAM4. Forms a complex with ACTN4, CASK, IQGAP1, MAGI2, SPTAN1 and SPTBN1. Interacts with DDN; the interaction is direct. Self-associates (via the Ig-like domains). Also interacts (via the Ig-like domains) with KIRREL1 and KIRREL2; the interaction with KIRREL1 is dependent on KIRREL1 glycosylation. Interacts with KIRREL3. Interacts with phosphatidylinositol 3-kinase regulatory subunit PIK3R1; the interaction is reduced by high glucose levels. Phosphorylated at Tyr-1208 by FYN, leading to the recruitment and activation of phospholipase C-gamma-1/PLCG1. Tyrosine phosphorylation is reduced by high glucose levels. Dephosphorylated by tensin TNS2 which leads to reduced binding of NPHN1 to PIK3R1. Expressed in kidney glomeruli. In the embryo, expressed in the mesonephric kidney at 11 dpc with strong expression in cranial tubules with podocyte-like structures. Expression is observed in the podocytes of the developing kidney from 13 dpc. High expression is also detected in the developing cerebellum, hindbrain, spinal cord, retina and hypothalamus. Expressed in skeletal muscle during myoblast fusion such as in the adult following acute injury and in the embryo but not detected in uninjured adult skeletal muscle. Isoform 1 and isoform 2 are expressed in the newborn brain and developing cerebellum. Isoform 1 is the predominant isoform in adult kidney.

It is found in the cell membrane. Seems to play a role in the development or function of the kidney glomerular filtration barrier. Regulates glomerular vascular permeability. May anchor the podocyte slit diaphragm to the actin cytoskeleton. Plays a role in skeletal muscle formation through regulation of myoblast fusion. The sequence is that of Nephrin (Nphs1) from Mus musculus (Mouse).